The chain runs to 143 residues: Transcriptional regulator MraZ (143 aa).

SpoVT-AbrB domains are found at residues 5–47 and 76–119; these read TYEP…SAEE and ASDE…DAAA.

This sequence belongs to the MraZ family. In terms of assembly, forms oligomers.

The protein resides in the cytoplasm. The protein localises to the nucleoid. The sequence is that of Transcriptional regulator MraZ from Kocuria rhizophila (strain ATCC 9341 / DSM 348 / NBRC 103217 / DC2201).